A 638-amino-acid chain; its full sequence is Probable lysine-specific demethylase 4F (638 aa).

A JmjN domain is found at 15–57; that stretch reads IMTFYPTMEEFADFNTYVAYMESQGAHRAGLAKVIPPKEWKAR. Y133 provides a ligand contact to 2-oxoglutarate. Positions 143 to 309 constitute a JmjC domain; it reads EESTKQWNLG…YGKVASQCSC (167 aa). Positions 189 and 191 each coordinate Fe cation. N199 and K207 together coordinate 2-oxoglutarate. Zn(2+) is bound by residues C235 and H241. Residue K242 coordinates 2-oxoglutarate. Fe cation is bound at residue H277. Residues C307 and C309 each contribute to the Zn(2+) site. Positions 426–474 are disordered; the sequence is PCRGCGRGRGRGRGRGRRPRELGTEETTVQSAAKRRLSVGTGSRAPGRK. The segment covering 431–443 has biased composition (basic residues); that stretch reads GRGRGRGRGRGRR.

The protein belongs to the JHDM3 histone demethylase family. Requires Fe(2+) as cofactor.

The protein localises to the nucleus. The catalysed reaction is N(6),N(6),N(6)-trimethyl-L-lysyl(9)-[histone H3] + 2 2-oxoglutarate + 2 O2 = N(6)-methyl-L-lysyl(9)-[histone H3] + 2 formaldehyde + 2 succinate + 2 CO2. In terms of biological role, probable histone demethylase that specifically demethylates 'Lys-9' of histone H3, thereby playing a central role in histone code. This Homo sapiens (Human) protein is Probable lysine-specific demethylase 4F.